The following is a 306-amino-acid chain: Protein farnesyltransferase/geranylgeranyltransferase type-1 subunit alpha (306 aa).

PFTA repeat units lie at residues 48–82, 84–118, 125–159, 161–195, and 201–235; these read YSER…NLPN, NLYD…QIME, DPYR…TFDL, NDAK…SKKH, and TIDE…RFDR.

It belongs to the protein prenyltransferase subunit alpha family. Heterodimer of an alpha and a beta subunit. Mg(2+) is required as a cofactor.

The enzyme catalyses L-cysteinyl-[protein] + (2E,6E)-farnesyl diphosphate = S-(2E,6E)-farnesyl-L-cysteinyl-[protein] + diphosphate. The catalysed reaction is geranylgeranyl diphosphate + L-cysteinyl-[protein] = S-geranylgeranyl-L-cysteinyl-[protein] + diphosphate. Its function is as follows. Essential subunit of both the farnesyltransferase and the geranylgeranyltransferase complex. Contributes to the transfer of a farnesyl or geranylgeranyl moiety from farnesyl or geranylgeranyl diphosphate to a cysteine at the fourth position from the C-terminus of several proteins having the C-terminal sequence Cys-aliphatic-aliphatic-X. The sequence is that of Protein farnesyltransferase/geranylgeranyltransferase type-1 subunit alpha (RAM2) from Candida albicans (Yeast).